The following is a 472-amino-acid chain: 3-isopropylmalate dehydratase large subunit (472 aa).

[4Fe-4S] cluster is bound by residues Cys-350, Cys-411, and Cys-414.

It belongs to the aconitase/IPM isomerase family. LeuC type 1 subfamily. In terms of assembly, heterodimer of LeuC and LeuD. The cofactor is [4Fe-4S] cluster.

It catalyses the reaction (2R,3S)-3-isopropylmalate = (2S)-2-isopropylmalate. It participates in amino-acid biosynthesis; L-leucine biosynthesis; L-leucine from 3-methyl-2-oxobutanoate: step 2/4. Catalyzes the isomerization between 2-isopropylmalate and 3-isopropylmalate, via the formation of 2-isopropylmaleate. The sequence is that of 3-isopropylmalate dehydratase large subunit from Alcanivorax borkumensis (strain ATCC 700651 / DSM 11573 / NCIMB 13689 / SK2).